The following is a 263-amino-acid chain: Indole-3-glycerol phosphate synthase (263 aa).

Belongs to the TrpC family.

It carries out the reaction 1-(2-carboxyphenylamino)-1-deoxy-D-ribulose 5-phosphate + H(+) = (1S,2R)-1-C-(indol-3-yl)glycerol 3-phosphate + CO2 + H2O. The protein operates within amino-acid biosynthesis; L-tryptophan biosynthesis; L-tryptophan from chorismate: step 4/5. This chain is Indole-3-glycerol phosphate synthase, found in Aliarcobacter butzleri (strain RM4018) (Arcobacter butzleri).